The following is a 322-amino-acid chain: MSPPAAVSPTTRSVELAAPAVKLPVGLSKNNTTATIEEMEGKWDDFKFAPIRESQVSRAMTRRYFQDLDNYAESDIVIIGAGSCGLSAAYILGKKRPDLRIAIIEASVSPGGGAWLGGQLFSAMVMRKPADAFLREVGVPYEDEGNYVVVKHAALFTSTIMSKVLQLPNIKLFNATCVEDLITRPSEEGVRISGVVTNWTLVSMHHDDQSCMDPNTINAPLVISTTGHDGPMGAFSVKRLVSMQRIEKLGGMRGLDMNVAEDAIVKGTREIVPGLIVGGMELSEVDGANRMGPTFGAMALSGLKAAEEALKIFDIRKKQNAF.

Substrate is bound by residues cysteine 84, 105 to 106 (EA), glycine 113, and valine 178. Position 211 is a 2,3-didehydroalanine (Cys) (cysteine 211). Residues aspartate 213, histidine 228, methionine 280, and 290–292 (RMG) each bind substrate.

Belongs to the THI4 family. Homooctamer. Fe cation is required as a cofactor. In terms of processing, during the catalytic reaction, a sulfide is transferred from Cys-211 to a reaction intermediate, generating a dehydroalanine residue.

It is found in the cytoplasm. It localises to the nucleus. The enzyme catalyses [ADP-thiazole synthase]-L-cysteine + glycine + NAD(+) = [ADP-thiazole synthase]-dehydroalanine + ADP-5-ethyl-4-methylthiazole-2-carboxylate + nicotinamide + 3 H2O + 2 H(+). In terms of biological role, involved in biosynthesis of the thiamine precursor thiazole. Catalyzes the conversion of NAD and glycine to adenosine diphosphate 5-(2-hydroxyethyl)-4-methylthiazole-2-carboxylic acid (ADT), an adenylated thiazole intermediate. The reaction includes an iron-dependent sulfide transfer from a conserved cysteine residue of the protein to a thiazole intermediate. The enzyme can only undergo a single turnover, which suggests it is a suicide enzyme. May have additional roles in adaptation to various stress conditions and in DNA damage tolerance. This chain is Thiamine thiazole synthase, found in Fusarium vanettenii (strain ATCC MYA-4622 / CBS 123669 / FGSC 9596 / NRRL 45880 / 77-13-4) (Fusarium solani subsp. pisi).